Here is a 365-residue protein sequence, read N- to C-terminus: Protein mab-21-like (365 aa).

It belongs to the mab-21 family.

In Aedes aegypti (Yellowfever mosquito), this protein is Protein mab-21-like.